The sequence spans 199 residues: Small ribosomal subunit protein uS4c (199 aa).

Residues 1-24 (MESDQSKVESDQSKMESDQSKVES) show a composition bias toward basic and acidic residues. Residues 1-35 (MESDQSKVESDQSKMESDQSKVESDQSISQSTSKK) are disordered. One can recognise an S4 RNA-binding domain in the interval 84–146 (MRLDNIIFRL…QKSQELIKRN (63 aa)).

The protein belongs to the universal ribosomal protein uS4 family. In terms of assembly, part of the 30S ribosomal subunit. Contacts protein S5. The interaction surface between S4 and S5 is involved in control of translational fidelity.

It is found in the plastid. Its subcellular location is the chloroplast. One of the primary rRNA binding proteins, it binds directly to 16S rRNA where it nucleates assembly of the body of the 30S subunit. Its function is as follows. With S5 and S12 plays an important role in translational accuracy. The chain is Small ribosomal subunit protein uS4c (rps4) from Psilotum nudum (Whisk fern).